An 87-amino-acid polypeptide reads, in one-letter code: Chaperone NapD (87 aa).

The protein belongs to the NapD family. Interacts with the cytoplasmic NapA precursor.

The protein localises to the cytoplasm. Chaperone for NapA, the catalytic subunit of the periplasmic nitrate reductase. It binds directly and specifically to the twin-arginine signal peptide of NapA, preventing premature interaction with the Tat translocase and premature export. The chain is Chaperone NapD from Escherichia coli O157:H7.